Consider the following 64-residue polypeptide: MKIHYLLFAFLLVLLSPLAGVFSKTINNPVSCCMIGGICRYLCKGNILQNGSCGVTSLNCCKRK.

Residues 1–23 (MKIHYLLFAFLLVLLSPLAGVFS) form the signal peptide. Intrachain disulfides connect cysteine 32-cysteine 60, cysteine 39-cysteine 53, and cysteine 43-cysteine 61.

This sequence belongs to the beta-defensin family.

It is found in the secreted. Its function is as follows. Has antibacterial activity. The polypeptide is Beta-defensin 5 (Defb5) (Mus musculus (Mouse)).